Here is a 420-residue protein sequence, read N- to C-terminus: MVSRQEQFEQVQAVKKSINTASEEVKNQALLAMADHLVAATEEILAANALDMAAAKGKISDVMLDRLYLDADRIEAMARGIREVVALPDPIGEVLETSQLENGLVITKKRVAMGVIGIIYESRPNVTSDAAALTLKSGNAVVLRSGKDAYQTTHAIVTALKKGLETTTIHPNVIQLVEDTSRESSYAMMKAKGYLDLLIPRGGAGLINAVVENAIVPVIETGTGIVHVYVDKDADEDKALSIINNAKTSRPSVCNAMEVLLVHENKAASILPRLDQMLVADRKEAGLEPIQFRLDSKASQFVSGQAAQAQDFDTEFLDYILAVKVVSSLEEAVAHIESHSTHHSDAIVTENAEAAAYFTDQVDSAAVYVNASTRFTDGGQFGLGCEMGISTQKLHARGPMGLKELTSYKYVVAGDGQIRE.

This sequence belongs to the gamma-glutamyl phosphate reductase family.

The protein localises to the cytoplasm. The catalysed reaction is L-glutamate 5-semialdehyde + phosphate + NADP(+) = L-glutamyl 5-phosphate + NADPH + H(+). It functions in the pathway amino-acid biosynthesis; L-proline biosynthesis; L-glutamate 5-semialdehyde from L-glutamate: step 2/2. Catalyzes the NADPH-dependent reduction of L-glutamate 5-phosphate into L-glutamate 5-semialdehyde and phosphate. The product spontaneously undergoes cyclization to form 1-pyrroline-5-carboxylate. The protein is Gamma-glutamyl phosphate reductase of Streptococcus pneumoniae (strain ATCC 700669 / Spain 23F-1).